The sequence spans 417 residues: Probable lysophospholipase BODYGUARD 4 (417 aa).

Residues 1–49 (MSFPRKFGTAIHAALSFIVFFFLDLLDAILCVVYEFVDEILEENSTGCY) form the signal peptide. Residue Cys50 is the site of N-palmitoyl cysteine attachment. Positions 150 to 259 (VIFIHGFMGS…PPYFPSSVEG (110 aa)) constitute an AB hydrolase-1 domain. Residue His154 is part of the active site. Residue Ser225 is the Nucleophile of the active site. Catalysis depends on charge relay system residues Asp367 and His395.

In terms of tissue distribution, expressed in epidermal cells.

The protein localises to the cell membrane. It is found in the secreted. Its subcellular location is the cell wall. Its function is as follows. Involved in cuticle development and morphogenesis. The polypeptide is Probable lysophospholipase BODYGUARD 4 (Arabidopsis thaliana (Mouse-ear cress)).